Consider the following 129-residue polypeptide: Small ribosomal subunit protein uS11 (129 aa).

This sequence belongs to the universal ribosomal protein uS11 family. In terms of assembly, part of the 30S ribosomal subunit. Interacts with proteins S7 and S18. Binds to IF-3.

Functionally, located on the platform of the 30S subunit, it bridges several disparate RNA helices of the 16S rRNA. Forms part of the Shine-Dalgarno cleft in the 70S ribosome. This is Small ribosomal subunit protein uS11 from Rhizorhabdus wittichii (strain DSM 6014 / CCUG 31198 / JCM 15750 / NBRC 105917 / EY 4224 / RW1) (Sphingomonas wittichii).